The following is a 262-amino-acid chain: Tritrans,polycis-undecaprenyl-diphosphate synthase (geranylgeranyl-diphosphate specific) (262 aa).

Asp40 is an active-site residue. Residue Asp40 coordinates Mg(2+). Residues 41-44 (GNRR), Trp45, and 85-87 (STE) contribute to the substrate site. Asn88 functions as the Proton acceptor in the catalytic mechanism. Residues Arg92, Arg211, and 217–219 (RIS) each bind substrate. Glu230 lines the Mg(2+) pocket.

Belongs to the UPP synthase family. Homodimer. Requires Mg(2+) as cofactor.

It catalyses the reaction geranylgeranyl diphosphate + 7 isopentenyl diphosphate = tri-trans,hepta-cis-undecaprenyl diphosphate + 7 diphosphate. Functionally, catalyzes the sequential condensation of isopentenyl diphosphate (IPP) with geranylgeranyl diphosphate (GGPP) to yield (2Z,6Z,10Z,14Z,18Z,22Z,26Z,30E,34E,38E)-undecaprenyl diphosphate (tritrans,heptacis-UPP). It is probably the precursor of glycosyl carrier lipids. The chain is Tritrans,polycis-undecaprenyl-diphosphate synthase (geranylgeranyl-diphosphate specific) from Sulfurisphaera tokodaii (strain DSM 16993 / JCM 10545 / NBRC 100140 / 7) (Sulfolobus tokodaii).